A 174-amino-acid polypeptide reads, in one-letter code: Keratin-associated protein 1-5 (174 aa).

Positions C3–P172 are 15 X 5 AA repeats of C-C-[QEPVRC]-[TPIVLE]-[SRHVP].

Belongs to the KRTAP type 1 family. In terms of assembly, interacts with hair keratins. Expressed in the middle/upper portions of the hair cortex, in the region termed the keratogenous zone.

In terms of biological role, in the hair cortex, hair keratin intermediate filaments are embedded in an interfilamentous matrix, consisting of hair keratin-associated proteins (KRTAP), which are essential for the formation of a rigid and resistant hair shaft through their extensive disulfide bond cross-linking with abundant cysteine residues of hair keratins. The matrix proteins include the high-sulfur and high-glycine-tyrosine keratins. In Homo sapiens (Human), this protein is Keratin-associated protein 1-5 (KRTAP1-5).